The following is a 352-amino-acid chain: Glutamine synthetase cytosolic isozyme (352 aa).

Residues 19–98 (FIAEYIWIDA…VMCDTYTPAG (80 aa)) enclose the GS beta-grasp domain. The region spanning 105-352 (KRCNAAKIFS…TSMIAETTIL (248 aa)) is the GS catalytic domain.

This sequence belongs to the glutamine synthetase family. In terms of assembly, homooctamer.

It is found in the cytoplasm. The enzyme catalyses L-glutamate + NH4(+) + ATP = L-glutamine + ADP + phosphate + H(+). This chain is Glutamine synthetase cytosolic isozyme (GLN1), found in Daucus carota (Wild carrot).